We begin with the raw amino-acid sequence, 333 residues long: Delta-aminolevulinic acid dehydratase (333 aa).

Residues C127, C129, and C137 each contribute to the Zn(2+) site. K204 (schiff-base intermediate with substrate) is an active-site residue. Positions 214 and 226 each coordinate 5-aminolevulinate. K257 functions as the Schiff-base intermediate with substrate in the catalytic mechanism. 5-aminolevulinate contacts are provided by S283 and Y322.

Belongs to the ALAD family. As to quaternary structure, homooctamer. Zn(2+) is required as a cofactor.

It carries out the reaction 2 5-aminolevulinate = porphobilinogen + 2 H2O + H(+). The protein operates within porphyrin-containing compound metabolism; protoporphyrin-IX biosynthesis; coproporphyrinogen-III from 5-aminolevulinate: step 1/4. Functionally, catalyzes an early step in the biosynthesis of tetrapyrroles. Binds two molecules of 5-aminolevulinate per subunit, each at a distinct site, and catalyzes their condensation to form porphobilinogen. The protein is Delta-aminolevulinic acid dehydratase (alad) of Dictyostelium discoideum (Social amoeba).